A 319-amino-acid chain; its full sequence is Sphingomyelinase D (319 aa).

The signal sequence occupies residues 1–23 (MTPLLRTICAILCILIAVPLTFA). Residue His44 is part of the active site. The Mg(2+) site is built by Glu64, Asp66, and Asp109. The SMD-tail signature appears at 312–319 (ATGADKPW).

Belongs to the sphingomyelinase D/phospholipase D family. Mg(2+) serves as cofactor.

The protein resides in the secreted. The catalysed reaction is a sphingomyelin + H2O = an N-acylsphing-4-enine 1-phosphate + choline + H(+). In terms of biological role, catalyzes the hydrolysis of sphingomyelin. Sphingomyelinases D are produced by some spider in their venoms, but also by arthropods such as ticks, or pathogenic bacteria and fungi. They might play a role in pathogenicity through different mechanisms, such as membrane destabilization and host cell penetration, but also pulmonary inflammation and cutaneous lesions. The chain is Sphingomyelinase D from Ajellomyces capsulatus (strain G186AR / H82 / ATCC MYA-2454 / RMSCC 2432) (Darling's disease fungus).